A 967-amino-acid chain; its full sequence is MANRNLEKLASIDAQLRLLVPGKVSEDDKLIEYDALLLDKFLDILQDLHGEDLKEAVQECYELSAEYEGKHDPKKLEELGSVLTSLDPGDSIVIAKAFSHMLNLANLAEEVQIAYRRRIKLKRGDFADEANATTESDIEETFKKLVLKLNKSPEEVFDALKNQTVDLVLTAHPTQSVRRSLLQKHGRIRNCLAQLYAKDITPDDKQELDEALHREIQAAFRTDEIRRTPPTPQDEMRAGMSYFHETIWKGVPKFLRRVDTALKNIGINERVPYNAPLIQFSSWMGGDRDGKHPRVTPEVTRDVCLLARMMASNMYFSQIEDLMFEMSMWRCNSELRVRAEELYRTARRDVKHYIEFWKQVPPTEPYRVILGDVRDKLYNTRERSRHLLAHGISDIPEEAVYTNVEQFLEPLELCYRSLCDCGDRVIADGSLLDFLRQVSTFGLSLVKLDIRQESDRHTDVLDAITQHLEIGSYREWSEEKRQEWLLAELSGKRPLFGSDLPKTEEVKDVLDTFNVLAELPSDCFGAYIISMATSPSDVLAVELLQRECHVKHPLRVVPLFEKLADLEAAPAAMARLFSIDWYRNRIDGKQEVMIGYSDSGKDAGRFSAAWQLYKAQEEIIKVAKEFGVKLVIFHGRGGTVGRGGGPTHLAILSQPPDTIHGSLRVTVQGEVIEQSFGEEHLCFRTLQRFCAATLEHGMNPPISPRPEWRELMDQMAVVATEEYRSIVFKEPRFVEYFRLATPELEYGRMNIGSRPSKRKPSGGIESLRAIPWIFAWTQTRFHLPVWLGFGAAFKHAIKKDSKNLQMLQEMYKTWPFFRVTIDLVEMVFAKGDPGIAALNDKLLVSEDLWPFGESLRANYEETKDYLLKIAGHRDLLEGDPYLKQRIRLRDSYITTLNVCQAYTLKRIRDPNYHVTLRPHISKEYAAEPSKPADELIHLNPTSEYAPGLEDTLILTMKGIAAGMQNTG.

Phosphoserine is present on Ser11. Residues His172 and Lys601 contribute to the active site.

The protein belongs to the PEPCase type 1 family. As to quaternary structure, homotetramer. Mg(2+) serves as cofactor.

The protein resides in the cytoplasm. It carries out the reaction oxaloacetate + phosphate = phosphoenolpyruvate + hydrogencarbonate. Its pathway is photosynthesis; C3 acid pathway. By light-reversible phosphorylation. In terms of biological role, through the carboxylation of phosphoenolpyruvate (PEP) it forms oxaloacetate, a four-carbon dicarboxylic acid source for the tricarboxylic acid cycle. This chain is Phosphoenolpyruvate carboxylase (PPCA1), found in Flaveria pringlei.